The chain runs to 259 residues: Transcription factor bHLH80 (259 aa).

Residues 1 to 25 (MQSTHISGGSSGGGGGGGGEVSRSG) are disordered. Gly residues predominate over residues 9-20 (GSSGGGGGGGGE). Residues 187–237 (CATHPRSIAERVRRTRISDRIRRLQELVPNMDKQTNTADMLEEAVEYVKAL) form the bHLH domain.

As to quaternary structure, homodimer. Expressed constitutively in roots, leaves, stems, and flowers.

The protein resides in the nucleus. The protein is Transcription factor bHLH80 (BHLH80) of Arabidopsis thaliana (Mouse-ear cress).